A 289-amino-acid polypeptide reads, in one-letter code: Early E4 34 kDa protein (289 aa).

This sequence belongs to the adenoviridae E4 30 to 34 kDa protein family. Interacts with E1B-55k.

It localises to the host nucleus. The protein resides in the host cytoplasm. Functionally, plays a major role to prevent cellular inhibition of viral genome replication by nuclear bodies. Assembles an SCF-like E3 ubiquitin ligase complex based on the cellular proteins ELOB, ELOC, CUL5 and RBX1, in cooperation with viral E1B-55K. This viral RING-type ligase ubiquitinates cellular substrates prior to proteasomal degradation: p53/TP53, LIG4, MRE11-RAD50-NBS1 (MRN) complex, ITGA3, DAXX and BLM. The protein is Early E4 34 kDa protein of Human adenovirus F serotype 40 (HAdV-40).